A 387-amino-acid chain; its full sequence is Succinate--CoA ligase [ADP-forming] subunit beta (387 aa).

Residues 9-244 enclose the ATP-grasp domain; that stretch reads KQLFAEYGIP…KTQEDETEVL (236 aa). ATP-binding positions include Lys46, 53–55, Gly102, and Glu107; that span reads GRG. The Mg(2+) site is built by Asn199 and Asp213. Substrate contacts are provided by residues Asn264 and 321-323; that span reads GIV.

Belongs to the succinate/malate CoA ligase beta subunit family. Heterotetramer of two alpha and two beta subunits. Mg(2+) serves as cofactor.

The enzyme catalyses succinate + ATP + CoA = succinyl-CoA + ADP + phosphate. It carries out the reaction GTP + succinate + CoA = succinyl-CoA + GDP + phosphate. The protein operates within carbohydrate metabolism; tricarboxylic acid cycle; succinate from succinyl-CoA (ligase route): step 1/1. Functionally, succinyl-CoA synthetase functions in the citric acid cycle (TCA), coupling the hydrolysis of succinyl-CoA to the synthesis of either ATP or GTP and thus represents the only step of substrate-level phosphorylation in the TCA. The beta subunit provides nucleotide specificity of the enzyme and binds the substrate succinate, while the binding sites for coenzyme A and phosphate are found in the alpha subunit. In Xylella fastidiosa (strain M23), this protein is Succinate--CoA ligase [ADP-forming] subunit beta.